The following is a 491-amino-acid chain: UDP-N-acetylmuramate--L-alanine ligase (491 aa).

G126–T132 is a binding site for ATP.

The protein belongs to the MurCDEF family.

The protein localises to the cytoplasm. It carries out the reaction UDP-N-acetyl-alpha-D-muramate + L-alanine + ATP = UDP-N-acetyl-alpha-D-muramoyl-L-alanine + ADP + phosphate + H(+). It functions in the pathway cell wall biogenesis; peptidoglycan biosynthesis. Functionally, cell wall formation. This chain is UDP-N-acetylmuramate--L-alanine ligase, found in Klebsiella pneumoniae subsp. pneumoniae (strain ATCC 700721 / MGH 78578).